Consider the following 555-residue polypeptide: GPI-anchor transamidase component PIGS (555 aa).

Over 2–18 the chain is Cytoplasmic; the sequence is AATGAAATDLEVVRGKR. A cardiolipin contacts are provided by Arg15 and Arg18. The helical transmembrane segment at 19–39 threads the bilayer; the sequence is AALFFATVVIVLGLPLWWKTT. Residues 40 to 517 are Lumenal-facing; sequence ETYRAPLPYS…LHLLYFPDDQ (478 aa). 2 N-linked (GlcNAc...) asparagine glycosylation sites follow: Asn267 and Asn370. Residues 518–532 traverse the membrane as a helical segment; that stretch reads KFAIYIPLFLPMAVP. The Cytoplasmic portion of the chain corresponds to 533–555; it reads ILLSLFKIFLETRKSWKKPEKTD.

This sequence belongs to the PIGS family. As to quaternary structure, heteropentamer. Part of the GPI-anchor transamidase complex, consisting of PIGK, PIGT, PIGS, PIGU and GAA1.

The protein localises to the endoplasmic reticulum membrane. It participates in glycolipid biosynthesis; glycosylphosphatidylinositol-anchor biosynthesis. In terms of biological role, component of the glycosylphosphatidylinositol-anchor (GPI-anchor) transamidase (GPI-T) complex that catalyzes the formation of the linkage between a proprotein and a GPI-anchor and participates in GPI anchored protein biosynthesis. The chain is GPI-anchor transamidase component PIGS from Bos taurus (Bovine).